The chain runs to 185 residues: Ribosome maturation factor RimM (185 aa).

The region spanning 103-177 is the PRC barrel domain; sequence SEEYYWYEIL…SIIVKKIEWY (75 aa).

This sequence belongs to the RimM family. As to quaternary structure, binds ribosomal protein uS19.

The protein resides in the cytoplasm. In terms of biological role, an accessory protein needed during the final step in the assembly of 30S ribosomal subunit, possibly for assembly of the head region. Essential for efficient processing of 16S rRNA. May be needed both before and after RbfA during the maturation of 16S rRNA. It has affinity for free ribosomal 30S subunits but not for 70S ribosomes. This is Ribosome maturation factor RimM from Petrotoga mobilis (strain DSM 10674 / SJ95).